A 562-amino-acid chain; its full sequence is MENQKMPISSVPNLKDLNMISRPIANFPPSIWGDRFINYTCEDENDQTQKERQVEELKEQVRRELAATVDKPLQQLNIIDATQRLGIAYLFENEIEESLKHIYLHTYVENNCFEGSDDLYSVALWFRLLRQNGYKVSCDVFNKFRDNEGNFKNNLMEDAKGLLELYEATHVSIHGEEMLDDALEFTKTRLESVVSHLNYPLAEQVRHALYQPLHRGLPRLEAVYFFRIYEAHASHNKALLKLAKLDFNLLQSFHKKELSDIARWWKSLDFAAKFPFARDRLVEGYFWVLGVYFEPQYSLARKIIIKVFTMISTIDDIYDAYGTLDELKLFTKAMQRWDVGSLDQLPEYMKPCYKSILDVYNEIEEEMANQGSLFRMHYAKEVMKTIVEGYMDEAKWCHEKYVPTFQEYMSVALVTSGYTFLTTISYLGMGEIASKEAFDWLFSHPPVIEASESVGRLMDDMRSHKFEQERGHVASGIECYMKQYGVTEEEAHDEFRKRLVKAWKDINEECLRPYRVPKPLLTRILNLTRVIDVIYKNEDGYTHVKKAMKDNIASLLIDPVIV.

The Mg(2+) site is built by Asp315, Asp319, and Glu467. The DDXXD motif signature appears at 315-319; sequence DDIYD.

This sequence belongs to the terpene synthase family. Tpsa subfamily. It depends on Mg(2+) as a cofactor. The cofactor is Mn(2+).

Functionally, sesquiterpene synthase. This Santalum murrayanum (Bitter quandong) protein is Probable sesquiterpene synthase (STPS).